A 614-amino-acid chain; its full sequence is High-affinity choline transporter 1 (614 aa).

Residues 6–26 (GVVSIVLFYLLILVVGIWAGR) traverse the membrane as a helical segment. Topologically, residues 27–44 (KKQSGNDSEEEVMLAGRS) are cytoplasmic. The chain crosses the membrane as a helical span at residues 45–65 (IGLFVGIFTMTATWVGGGYIN). Residues 66-75 (GTAEAIYTSG) lie on the Extracellular side of the membrane. The chain crosses the membrane as a helical span at residues 76 to 96 (LVWCQAPFGYALSLVFGGIFF). Over 97–119 (ANPMRKQGYITMLDPLQDSFGER) the chain is Cytoplasmic. Residues 120 to 140 (MGGLLFLPALCGEVFWAAGIL) traverse the membrane as a helical segment. The Extracellular portion of the chain corresponds to 141–158 (AALGATLSVIIDMDHRTS). A helical transmembrane segment spans residues 159–179 (VILSSCIAIFYTLFGGLYSVA). Over 180 to 185 (YTDVIQ) the chain is Cytoplasmic. Residues 186-206 (LFCIFIGLWMCIPFAWSNEHV) form a helical membrane-spanning segment. The Extracellular portion of the chain corresponds to 207 to 225 (GSLSDLEVDWIGHVEPKKH). Residues 226 to 246 (WLYIDYGLLLVFGGIPWQVYF) form a helical membrane-spanning segment. Topologically, residues 247–262 (QRVLSSKTAGRAQLLS) are cytoplasmic. A helical transmembrane segment spans residues 263–283 (YVAAAGCILMAIPPVLIGAIA). Residues 284 to 305 (KATPWNETDYKGPYPLTVDETS) are Extracellular-facing. N289 carries N-linked (GlcNAc...) asparagine glycosylation. A helical transmembrane segment spans residues 306 to 326 (MILPMVLQYLTPDFVSFFGLG). Topologically, residues 327–364 (AVSAAVMSSADSSVLSAASMFARNVYKLIFRQKASEME) are cytoplasmic. A helical transmembrane segment spans residues 365 to 385 (IIWVMRVAIIVVGILATIMAL). The Extracellular segment spans residues 386 to 394 (TIPSIYGLW). The chain crosses the membrane as a helical span at residues 395–415 (SMCSDLVYVILFPQLLMVVHF). The Cytoplasmic segment spans residues 416–424 (KKHCNTYGS). A helical transmembrane segment spans residues 425–445 (LSAYIVALAIRLSGGEAILGL). Topologically, residues 446–467 (APLIKYPGYDEETKEQMFPFRT) are extracellular. A helical membrane pass occupies residues 468 to 488 (MAMLLSLVTLISVSWWTKMMF). Residues 489–614 (ESGKLPPSYD…PTAEQDNTAF (126 aa)) lie on the Cytoplasmic side of the membrane. The tract at residues 583 to 614 (ATGVKPSGGGGGHLQSQSGMAMPTAEQDNTAF) is disordered.

This sequence belongs to the sodium:solute symporter (SSF) (TC 2.A.21) family.

The protein localises to the membrane. Its function is as follows. Imports choline from the extracellular space to the neuron with high affinity. Rate-limiting step in acetylcholine synthesis. Sodium ion and chloride ion dependent. The chain is High-affinity choline transporter 1 from Drosophila melanogaster (Fruit fly).